An 858-amino-acid polypeptide reads, in one-letter code: Low-density lipoprotein receptor-related protein 12 (858 aa).

Positions 1–32 are cleaved as a signal peptide; that stretch reads MARRWSTKESQRRGSAWLLLFLAGVYGNGALA. The Extracellular portion of the chain corresponds to 33–492; it reads ELSENVHISG…ENCPVIVPTR (460 aa). Intrachain disulfides connect cysteine 47/cysteine 76, cysteine 103/cysteine 122, cysteine 166/cysteine 178, cysteine 173/cysteine 191, cysteine 185/cysteine 200, cysteine 215/cysteine 232, cysteine 222/cysteine 245, cysteine 239/cysteine 254, and cysteine 259/cysteine 285. In terms of domain architecture, CUB 1 spans 47 to 159; sequence CGESPEQIRA…KGFRLAYFSG (113 aa). An N-linked (GlcNAc...) asparagine glycan is attached at asparagine 75. LDL-receptor class A domains follow at residues 165–201 and 214–255; these read DCAC…EVCA and PCAY…IDCD. The CUB 2 domain occupies 259–372; it reads CGQWLKYFYG…RGFNATYQVD (114 aa). 2 N-linked (GlcNAc...) asparagine glycosylation sites follow: asparagine 284 and asparagine 366. LDL-receptor class A domains are found at residues 374–411, 412–449, and 450–486; these read FCLP…INCT, MCQK…KNCF, and FCQP…ENCP. 9 disulfide bridges follow: cysteine 375-cysteine 388, cysteine 382-cysteine 401, cysteine 395-cysteine 410, cysteine 413-cysteine 426, cysteine 420-cysteine 439, cysteine 433-cysteine 448, cysteine 451-cysteine 463, cysteine 458-cysteine 476, and cysteine 470-cysteine 485. A glycan (N-linked (GlcNAc...) asparagine) is linked at asparagine 409. A glycan (N-linked (GlcNAc...) asparagine) is linked at asparagine 441. A helical transmembrane segment spans residues 493 to 513; it reads VITAAVIGSLICGLLLVIALG. Residues 514-858 are Cytoplasmic-facing; that stretch reads CTCKLYSLRM…TSDDEALLLC (345 aa). Disordered stretches follow at residues 619-721 and 746-767; these read ALVS…VSPA and SSST…SGRE. The span at 712 to 721 shows a compositional bias: low complexity; the sequence is SVEAPSVSPA. The segment covering 746-755 has biased composition (polar residues); that stretch reads SSSTTQNRSP.

Belongs to the LDLR family. In terms of assembly, may interact with RACK1, ZFYVE9 and NMRK2.

The protein resides in the membrane. It is found in the coated pit. Its function is as follows. Probable receptor, which may be involved in the internalization of lipophilic molecules and/or signal transduction. May act as a tumor suppressor. The polypeptide is Low-density lipoprotein receptor-related protein 12 (Lrp12) (Mus musculus (Mouse)).